Reading from the N-terminus, the 542-residue chain is Calcium-dependent protein kinase 7 (542 aa).

A lipid anchor (N-myristoyl glycine) is attached at G2. Residues 79 to 337 (YIIGRKLGQG…AHEVLRHPWI (259 aa)) form the Protein kinase domain. ATP contacts are provided by residues 85-93 (LGQGQFGTT) and K108. The Proton acceptor role is filled by D203. Positions 343-373 (ATDQALDPSVISRLKQFSAMNKLKKLALRVI) are autoinhibitory domain. Positions 380–415 (EEIAGLREMFKAVDTKNRGVITFGELREGLRRFGAE) constitute an EF-hand 1 domain. Residues D393, E404, D431, N433, T435, E440, D465, D467, S469, Y471, K476, D499, N501, D503, Q505, and E510 each contribute to the Ca(2+) site. The EF-hand 2; degenerate domain occupies 416–451 (FKDTEIGDIMEAAHNDNNVTIHYEEFIAATLPLNKI). EF-hand domains lie at 452 to 487 (EREE…HNME) and 488 to 521 (DSLL…SNVG).

This sequence belongs to the protein kinase superfamily. Ser/Thr protein kinase family. CDPK subfamily. Expressed in roots. Expressed in leaf sheaths.

It localises to the membrane. It is found in the cytoplasm. Its subcellular location is the cytosol. It carries out the reaction L-seryl-[protein] + ATP = O-phospho-L-seryl-[protein] + ADP + H(+). The catalysed reaction is L-threonyl-[protein] + ATP = O-phospho-L-threonyl-[protein] + ADP + H(+). Activated by calcium. Autophosphorylation may play an important role in the regulation of the kinase activity. Functionally, may play a role in signal transduction pathways that involve calcium as a second messenger. May be a signaling component in the response to gibberellin and cold stress. This chain is Calcium-dependent protein kinase 7, found in Oryza sativa subsp. japonica (Rice).